The sequence spans 330 residues: Atypical chemokine receptor 1 (330 aa).

The Extracellular portion of the chain corresponds to 1–57 (MGNCLYPVADDNSTKLAIKEDFLIDFPEDYYPDYNETDVEAAAPCHSCSLLNYSSLP). N-linked (GlcNAc...) asparagine glycosylation is found at asparagine 12, asparagine 35, and asparagine 52. Disulfide bonds link cysteine 45-cysteine 270 and cysteine 123-cysteine 189. A helical transmembrane segment spans residues 58–78 (FFILVSILGILASGTILYALL). Topologically, residues 79-89 (RPLFRWQLYQD) are cytoplasmic. Residues 90–110 (RSTLVQLAVGSALFSIVVPIL) form a helical membrane-spanning segment. Topologically, residues 111–123 (ARGLSGALITSLC) are extracellular. Residues 124 to 147 (HLAHLVAYGSAFAQALLIGYHACL) form a helical membrane-spanning segment. Topologically, residues 148–160 (GPQLGAGQVPGLR) are cytoplasmic. A helical membrane pass occupies residues 161–181 (LGVTVGLWGVAALLSLPVVLG). Topologically, residues 182–201 (SDTSQGLCTVTFSGEWETLR) are extracellular. Residues 202 to 222 (YIHAAACFAIFVLLPLGLLGT) traverse the membrane as a helical segment. Over 223-238 (KGLKTVLGRAPCPWVD) the chain is Cytoplasmic. The chain crosses the membrane as a helical span at residues 239 to 259 (VLWVWFIFWWPQGMTLGLDSL). The Extracellular segment spans residues 260-281 (VRSKAIVVSTCPAQQALDMLLD). A helical transmembrane segment spans residues 282-302 (VAEALAILHCVATPLLLAWVC). The Cytoplasmic portion of the chain corresponds to 303–330 (YQATHTSPPSLPLPTTQTSHLDTLGGKS).

The protein belongs to the G-protein coupled receptor 1 family. Atypical chemokine receptor subfamily.

Its subcellular location is the early endosome. It localises to the recycling endosome. The protein resides in the membrane. Its function is as follows. Atypical chemokine receptor that controls chemokine levels and localization via high-affinity chemokine binding that is uncoupled from classic ligand-driven signal transduction cascades, resulting instead in chemokine sequestration, degradation, or transcytosis. Also known as interceptor (internalizing receptor) or chemokine-scavenging receptor or chemokine decoy receptor. Has a promiscuous chemokine-binding profile, interacting with inflammatory chemokines of both the CXC and the CC subfamilies but not with homeostatic chemokines. Acts as a receptor for chemokines including CCL2, CCL5, CCL7, CCL11, CCL13, CCL14, CCL17, CXCL5, CXCL6, IL8/CXCL8, CXCL11, GRO, RANTES, MCP-1 and TARC. May regulate chemokine bioavailability and, consequently, leukocyte recruitment through two distinct mechanisms: when expressed in endothelial cells, it sustains the abluminal to luminal transcytosis of tissue-derived chemokines and their subsequent presentation to circulating leukocytes; when expressed in erythrocytes, serves as blood reservoir of cognate chemokines but also as a chemokine sink, buffering potential surges in plasma chemokine levels. The protein is Atypical chemokine receptor 1 (ACKR1) of Bos taurus (Bovine).